We begin with the raw amino-acid sequence, 504 residues long: ATP synthase subunit alpha (504 aa).

An ATP-binding site is contributed by 170–177 (GDRQTGKT).

The protein belongs to the ATPase alpha/beta chains family. As to quaternary structure, F-type ATPases have 2 components, CF(1) - the catalytic core - and CF(0) - the membrane proton channel. CF(1) has five subunits: alpha(3), beta(3), gamma(1), delta(1), epsilon(1). CF(0) has four main subunits: a, b, b' and c.

The protein resides in the cellular thylakoid membrane. The catalysed reaction is ATP + H2O + 4 H(+)(in) = ADP + phosphate + 5 H(+)(out). Produces ATP from ADP in the presence of a proton gradient across the membrane. The alpha chain is a regulatory subunit. This is ATP synthase subunit alpha from Prochlorococcus marinus (strain MIT 9211).